The following is a 372-amino-acid chain: RNA polymerase sigma factor SigA (372 aa).

The segment at 139–209 is sigma-70 factor domain-2; sequence LAEANLRLVV…TRAIADQART (71 aa). Residues 163–166 carry the Interaction with polymerase core subunit RpoC motif; sequence DLIQ. The interval 218–294 is sigma-70 factor domain-3; that stretch reads ETINKLIRVQ…DQDALAPSDA (77 aa). Residues 307–360 are sigma-70 factor domain-4; it reads VLDTLTDREENVLRLRFGLDDGRTRTLEEVGKVFGVTRERIRQIEAKALRKLRH. Residues 333–352 constitute a DNA-binding region (H-T-H motif); sequence LEEVGKVFGVTRERIRQIEA.

This sequence belongs to the sigma-70 factor family. RpoD/SigA subfamily. Interacts transiently with the RNA polymerase catalytic core.

It is found in the cytoplasm. Functionally, sigma factors are initiation factors that promote the attachment of RNA polymerase to specific initiation sites and are then released. This sigma factor is the primary sigma factor during exponential growth. This is RNA polymerase sigma factor SigA from Halalkalibacterium halodurans (strain ATCC BAA-125 / DSM 18197 / FERM 7344 / JCM 9153 / C-125) (Bacillus halodurans).